The primary structure comprises 417 residues: Acid phosphatase (417 aa).

The N-terminal stretch at 1–19 is a signal peptide; the sequence is MFTKQSLVTLLGGLSLAVA. Asn122, Asn187, and Asn209 each carry an N-linked (GlcNAc...) asparagine glycan. Asp216 functions as the Proton donor in the catalytic mechanism. N-linked (GlcNAc...) asparagine glycans are attached at residues Asn218, Asn333, and Asn383.

In terms of processing, the N-terminus is blocked.

It localises to the secreted. The catalysed reaction is a phosphate monoester + H2O = an alcohol + phosphate. This chain is Acid phosphatase (phoA), found in Aspergillus niger.